The sequence spans 427 residues: Branched-chain-amino-acid aminotransferase, mitochondrial (427 aa).

Residues 1–47 (MSLMFLRRAGNIKGRNIRFALQRGSVGYSQQSSEACKNFLNTTQLRT) constitute a mitochondrion transit peptide. The residue at position 256 (lysine 256) is an N6-(pyridoxal phosphate)lysine.

The protein belongs to the class-IV pyridoxal-phosphate-dependent aminotransferase family. Pyridoxal 5'-phosphate serves as cofactor.

Its subcellular location is the mitochondrion. The protein localises to the nucleus. It is found in the cytoplasm. The catalysed reaction is L-leucine + 2-oxoglutarate = 4-methyl-2-oxopentanoate + L-glutamate. It catalyses the reaction L-isoleucine + 2-oxoglutarate = (S)-3-methyl-2-oxopentanoate + L-glutamate. It carries out the reaction L-valine + 2-oxoglutarate = 3-methyl-2-oxobutanoate + L-glutamate. Its function is as follows. Catalyzes the first reaction in the catabolism of the essential branched chain amino acids leucine, isoleucine, and valine. This is Branched-chain-amino-acid aminotransferase, mitochondrial (eca39) from Schizosaccharomyces pombe (strain 972 / ATCC 24843) (Fission yeast).